A 68-amino-acid polypeptide reads, in one-letter code: Large ribosomal subunit protein bL33c (68 aa).

The protein belongs to the bacterial ribosomal protein bL33 family.

It localises to the plastid. The protein is Large ribosomal subunit protein bL33c of Cuscuta exaltata (Tall dodder).